The following is a 115-amino-acid chain: Large ribosomal subunit protein P2 (115 aa).

An N-acetylmethionine modification is found at methionine 1. Phosphoserine is present on residues serine 17 and serine 19. Lysine 21 bears the N6-acetyllysine; alternate mark. Lysine 21 carries the post-translational modification N6-succinyllysine; alternate. Low complexity predominate over residues 76–90 (APGSAAPAAGSAPAA). The tract at residues 76-115 (APGSAAPAAGSAPAAAEEKKDEKKEESEESDDDMGFGLFD) is disordered. Phosphoserine occurs at positions 79 and 86. A compositionally biased stretch (basic and acidic residues) spans 91-101 (AEEKKDEKKEE). Serine 102 and serine 105 each carry phosphoserine.

This sequence belongs to the eukaryotic ribosomal protein P1/P2 family. In terms of assembly, heterodimer with RPLP1 at the lateral ribosomal stalk of the large ribosomal subunit.

Plays an important role in the elongation step of protein synthesis. The chain is Large ribosomal subunit protein P2 (Rplp2) from Mus musculus (Mouse).